The chain runs to 559 residues: Glucosylglycerate phosphorylase (559 aa).

Residue aspartate 229 is the Nucleophile of the active site.

It belongs to the glycosyl hydrolase 13 family. Glucosylglycerate phosphorylase subfamily.

The catalysed reaction is (2R)-2-O-(alpha-D-glucopyranosyl)-glycerate + phosphate = (R)-glycerate + alpha-D-glucose 1-phosphate. Functionally, catalyzes the reversible phosphorolysis of glucosylglycerate into alpha-D-glucose 1-phosphate (Glc1P) and D-glycerate (also called (R)-glycerate). May be a regulator of intracellular levels of glucosylglycerate, a compatible solute that primarily protects organisms facing salt stress and very specific nutritional constraints. Cannot catalyze the phosphorolysis of sucrose. Does not act on other sugars such as alpha-D-galactose 1-phosphate, alpha-D-mannose 1-phosphate or beta-D-glucose 1-phosphate; in vitro D-erythronate can substitute for D-glycerate with a much lower efficiency. The polypeptide is Glucosylglycerate phosphorylase (ycjM) (Escherichia coli (strain K12)).